We begin with the raw amino-acid sequence, 370 residues long: Gap junction delta-4 protein (370 aa).

The Cytoplasmic portion of the chain corresponds to 1–19; that stretch reads MEGVDLLGFLIITLNCNVT. Residues 20–40 form a helical membrane-spanning segment; the sequence is MXGKLWFVLTMLLRMLVIVLA. At 41–76 the chain is on the extracellular side; the sequence is GRPVYQDEQERFVCNTLQPGCANVCYDVFSPVSHLR. A helical transmembrane segment spans residues 77–97; the sequence is FWLIQGVCVLLPSAVFSVYVL. At 98 to 146 the chain is on the cytoplasmic side; it reads HRGATLAALGPRRCPEPRDTASGQRRCPGSCRERGGLEVPDFSAGYIIH. A helical membrane pass occupies residues 147–167; sequence LLLRTLLEAAFGALNYLLFGF. Residues 168-196 are Extracellular-facing; that stretch reads LAPNKFPCTRPPCTGVVDCYVSRPTEKSL. A helical transmembrane segment spans residues 197–217; that stretch reads LMLFLWAVSALSFLLGLADLV. Residues 218–370 lie on the Cytoplasmic side of the membrane; sequence CSLRRLMRRR…HLRARKSEWV (153 aa). Residues 227–370 form a disordered region; that stretch reads RPGPPTSPSI…HLRARKSEWV (144 aa). Basic and acidic residues predominate over residues 246-260; sequence PEGRPTDKEGGREQE. A compositionally biased stretch (low complexity) spans 331–345; that stretch reads PSAAPSHLAAHPSCS.

The protein belongs to the connexin family. Delta-type subfamily. As to quaternary structure, a connexon is composed of a hexamer of connexins.

It is found in the cell membrane. The protein resides in the cell junction. Its subcellular location is the gap junction. In terms of biological role, one gap junction consists of a cluster of closely packed pairs of transmembrane channels, the connexons, through which materials of low MW diffuse from one cell to a neighboring cell. The sequence is that of Gap junction delta-4 protein (GJD4) from Macaca fascicularis (Crab-eating macaque).